Reading from the N-terminus, the 124-residue chain is Large ribosomal subunit protein bL12 (124 aa).

The protein belongs to the bacterial ribosomal protein bL12 family. As to quaternary structure, homodimer. Part of the ribosomal stalk of the 50S ribosomal subunit. Forms a multimeric L10(L12)X complex, where L10 forms an elongated spine to which 2 to 4 L12 dimers bind in a sequential fashion. Binds GTP-bound translation factors.

Functionally, forms part of the ribosomal stalk which helps the ribosome interact with GTP-bound translation factors. Is thus essential for accurate translation. This chain is Large ribosomal subunit protein bL12, found in Akkermansia muciniphila (strain ATCC BAA-835 / DSM 22959 / JCM 33894 / BCRC 81048 / CCUG 64013 / CIP 107961 / Muc).